The sequence spans 287 residues: Co-chaperone protein DjlA (287 aa).

Topologically, residues 1 to 6 (MQIFGK) are periplasmic. A helical membrane pass occupies residues 7–30 (ILGAFFGFLFGGVFGALFGLFIGH). The Cytoplasmic portion of the chain corresponds to 31–287 (QFDKARRLSQ…DLIKKEKGFK (257 aa)). The tract at residues 192–213 (GGFGGQQHQSHHSSSHGGWQQA) is disordered. Residues 221 to 287 (DAYKILGIDA…DLIKKEKGFK (67 aa)) enclose the J domain.

In terms of assembly, homodimer.

Its subcellular location is the cell inner membrane. Its function is as follows. Regulatory DnaK co-chaperone. Direct interaction between DnaK and DjlA is needed for the induction of the wcaABCDE operon, involved in the synthesis of a colanic acid polysaccharide capsule, possibly through activation of the RcsB/RcsC phosphotransfer signaling pathway. The colanic acid capsule may help the bacterium survive conditions outside the host. The polypeptide is Co-chaperone protein DjlA (Vibrio vulnificus (strain CMCP6)).